Consider the following 76-residue polypeptide: UPF0235 protein MRA_1997 (76 aa).

This sequence belongs to the UPF0235 family.

In Mycobacterium tuberculosis (strain ATCC 25177 / H37Ra), this protein is UPF0235 protein MRA_1997.